The following is a 175-amino-acid chain: Shikimate kinase (175 aa).

16–21 (GAGKST) is a binding site for ATP. Serine 20 contributes to the Mg(2+) binding site. The substrate site is built by aspartate 38, arginine 62, and glycine 84. Arginine 122 serves as a coordination point for ATP. Arginine 141 provides a ligand contact to substrate.

This sequence belongs to the shikimate kinase family. In terms of assembly, monomer. It depends on Mg(2+) as a cofactor.

Its subcellular location is the cytoplasm. It catalyses the reaction shikimate + ATP = 3-phosphoshikimate + ADP + H(+). It participates in metabolic intermediate biosynthesis; chorismate biosynthesis; chorismate from D-erythrose 4-phosphate and phosphoenolpyruvate: step 5/7. Its function is as follows. Catalyzes the specific phosphorylation of the 3-hydroxyl group of shikimic acid using ATP as a cosubstrate. The chain is Shikimate kinase from Legionella pneumophila (strain Paris).